Reading from the N-terminus, the 172-residue chain is uncharacterized protein (172 aa).

In terms of domain architecture, PfpI endopeptidase spans 3 to 171 (KKVAIILADE…FNREIVKKLE (169 aa)).

Belongs to the peptidase C56 family.

This is an uncharacterized protein from Staphylococcus epidermidis (strain ATCC 35984 / DSM 28319 / BCRC 17069 / CCUG 31568 / BM 3577 / RP62A).